We begin with the raw amino-acid sequence, 85 residues long: MKLLLLLTISASMLIEGLVNADGYIRGGDGCKVSCVINHVFCDNECKAAGGSYGYCWGWGLACWCEGLPADREWDYETDTCGGKK.

Residues Met1 to Ala21 form the signal peptide. The region spanning Asp22–Gly82 is the LCN-type CS-alpha/beta domain. Disulfide bonds link Cys31/Cys81, Cys35/Cys56, Cys42/Cys63, and Cys46/Cys65. Gly82 is subject to Glycine amide.

Belongs to the long (4 C-C) scorpion toxin superfamily. Sodium channel inhibitor family. Beta subfamily. As to expression, expressed by the venom gland.

Its subcellular location is the secreted. Depressant insect beta-toxins cause a transient contraction paralysis followed by a slow flaccid paralysis. They bind voltage-independently at site-4 of sodium channels (Nav) and block action potentials, primarily by depolarizing the axonal membrane and suppressing the sodium current. This depressant toxin is active only on insects. It is found in a relatively small amount in the venom. This chain is Beta-insect depressant toxin Lqh-dprIT3f, found in Leiurus hebraeus (Hebrew deathstalker scorpion).